Here is a 463-residue protein sequence, read N- to C-terminus: uncharacterized protein (463 aa).

This is an uncharacterized protein from Ostreid herpesvirus 1 (isolate France) (OsHV-1).